We begin with the raw amino-acid sequence, 436 residues long: Histone acetyltransferase type B subunit 2 (436 aa).

Residues 1 to 19 (MEPYDDGFIEEQEEQEEER) show a composition bias toward acidic residues. A disordered region spans residues 1–22 (MEPYDDGFIEEQEEQEEERTEE). 5 WD repeats span residues 136-176 (DHKG…SLPT), 187-227 (GHTK…KGNK), 237-277 (HHSS…TTRA), 284-324 (QHRD…TKLH), and 328-368 (CHTD…EEQT). Residues 370-374 (DDAQD) form an interaction with the histone H4 N-terminus region. A WD 6 repeat occupies 385–425 (GHTNRISDFSWNLNDPWVLCSAAEDNLLQVWKVADAIVGKD).

Belongs to the WD repeat RBAP46/RBAP48/MSI1 family. As to quaternary structure, component of the HAT-B complex composed of at least hat1 and hat2. The HAT-B complex binds to histone H4 tail.

The protein resides in the cytoplasm. It is found in the nucleus. Functionally, regulatory subunit of the histone acetylase B (HAT-B) complex. The complex acetylates 'Lys-12' of histone H4 which is required for telomeric silencing. This Aspergillus oryzae (strain ATCC 42149 / RIB 40) (Yellow koji mold) protein is Histone acetyltransferase type B subunit 2 (hat2).